The primary structure comprises 225 residues: Small ribosomal subunit protein uS2 (225 aa).

It belongs to the universal ribosomal protein uS2 family.

This Metallosphaera sedula (strain ATCC 51363 / DSM 5348 / JCM 9185 / NBRC 15509 / TH2) protein is Small ribosomal subunit protein uS2.